The following is a 2146-amino-acid chain: Conidial pigment polyketide synthase alb1 (2146 aa).

The tract at residues 8 to 244 is N-terminal acylcarrier protein transacylase domain (SAT); the sequence is YLFGDQTISC…KAPGVSGPYH (237 aa). The Ketosynthase family 3 (KS3) domain maps to 375–806; sequence RSKIAIIGMS…GGNTALLMED (432 aa). Active-site for beta-ketoacyl synthase activity residues include cysteine 547, histidine 682, and histidine 724. The interval 911–1232 is malonyl-CoA:ACP transacylase (MAT) domain; the sequence is GFVFTGQGAQ…LSTLHLAGVE (322 aa). The active-site For acyl/malonyl transferase activity is serine 1001. Positions 1290-1602 are product template (PT) domain; that stretch reads TTAAQKIVEC…ARKILDTVLP (313 aa). Positions 1294 to 1427 are N-terminal hotdog fold; that stretch reads QKIVECREDG…VKLFNCAERE (134 aa). The PKS/mFAS DH domain maps to 1294 to 1598; the sequence is QKIVECREDG…FQALARKILD (305 aa). Histidine 1326 serves as the catalytic Proton acceptor; for dehydratase activity. The C-terminal hotdog fold stretch occupies residues 1453–1598; sequence AHRMQRGMVY…FQALARKILD (146 aa). Aspartate 1511 acts as the Proton donor; for dehydratase activity in catalysis. Positions 1611–1644 are disordered; the sequence is GAPAPAPARPIGEKKAPPPIKVTGPPKPNPSNAR. A compositionally biased stretch (pro residues) spans 1627 to 1639; sequence PPPIKVTGPPKPN. The 75-residue stretch at 1647–1721 folds into the Carrier 1 domain; sequence SPVVARALEI…DFKAYLAEKG (75 aa). Residue serine 1681 is modified to O-(pantetheine 4'-phosphoryl)serine. Residues 1724–1769 form a disordered region; that stretch reads DSSSPEPSSEPESKFSFNSDASSEASSGLTTPGITSPVKHEAPKGG. The segment covering 1738 to 1750 has biased composition (low complexity); it reads FSFNSDASSEASS. The region spanning 1768-1845 is the Carrier 2 domain; sequence GGQNKVWKSI…AVQAALDLKP (78 aa). Serine 1805 is subject to O-(pantetheine 4'-phosphoryl)serine. Residues 1892–2019 are claisen cyclase domain; it reads KLFMFPDGSG…SIGLFGDGKR (128 aa). Residue serine 1962 is the For Claisen cyclase activity of the active site.

The protein localises to the endosome. The enzyme catalyses 6 malonyl-CoA + acetyl-CoA + 6 H(+) = naphtopyrone YWA1 + 6 CO2 + 7 CoA + H2O. It functions in the pathway pigment biosynthesis; melanin biosynthesis. In terms of biological role, non-reducing polyketide synthase; part of the gene cluster that mediates the biosynthesis of dihydroxynaphthalene (DHN)-melanin, a bluish-green pigment and a structural component of the conidial wall. The first step of the pathway is the production of the heptaketide naphtopyrone YWA1 by the polyketide synthase alb1 though condensation of acetyl-CoA with malonyl-CoA. The naphtopyrone YWA1 is then converted to the pentaketide 1,3,6,8-tetrahydroxynaphthalene (1,3,6,8-THN) by the heptaketide hydrolyase ayg1 though chain-length shortening. 1,3,6,8-THN is substrate of the hydroxynaphthalene reductase arp2 to yield scytalone. The scytalone dehydratase arp1 then reduces scytalone to 1,3,8-THN. 1,3,8-THN is also substrate of the hydroxynaphthalene reductase arp2 to yield vermelone. Vermelone is further converted by the multicopper oxidase abr1 to 1,8-DHN. Finally the laccase abr2 transforms 1,8-DHN to DHN-melanin. DHN-melanin biosynthesis appears to be initiated in endosomes where early enzymes (abl1, ayg1, arp1 and arp2) localize, with exocytosis leading to melanin deposition on the cell surface where late enzymes (abr1 and abr2) localize. DHN-melanin is an important structural component of the outer cell wall and is required for the presence of conidial surface hydrophobins. DHN-melanin also plays a crucial role in fungal virulence, including a protective role against the host's immune defenses. DHN-melanin protects also conidia against amoeba predation. The protein is Conidial pigment polyketide synthase alb1 of Aspergillus fumigatus (strain ATCC MYA-4609 / CBS 101355 / FGSC A1100 / Af293) (Neosartorya fumigata).